Consider the following 122-residue polypeptide: Holo-[acyl-carrier-protein] synthase (122 aa).

Residues aspartate 8 and glutamate 56 each contribute to the Mg(2+) site.

This sequence belongs to the P-Pant transferase superfamily. AcpS family. Requires Mg(2+) as cofactor.

It is found in the cytoplasm. The enzyme catalyses apo-[ACP] + CoA = holo-[ACP] + adenosine 3',5'-bisphosphate + H(+). Transfers the 4'-phosphopantetheine moiety from coenzyme A to a Ser of acyl-carrier-protein. This Salinispora arenicola (strain CNS-205) protein is Holo-[acyl-carrier-protein] synthase.